Consider the following 388-residue polypeptide: MANTWRLDIRGLDGSLVLIVLALITIGLVMVLSSSVAVSEVRFGHQWHYFQRQVFALGVGGLFAALVLMVPSQSWLQHRGKWFLLGLVLLALVLIFGREIGGAKRWLPLVVMNFQPAEWMKIATILFLAGYLQRHQDAVKQDSTAVIRLFLPFGIMAGLLLLQPDYGTTVLIAGVLVGMLFIAGAPFRYFVITVLPIGAILAVLLINSPYRMARVMNFMDPWQDPYGVGYQLSQALMAIGSGGITGSGLGASVQKLLYLPDAHTDFMFAVFAEETGWLGVVILLSLYGLLLWRMFAVAQAAWLPQAPFKALVVYGVAIMFAGQLLINVGVNLGVFPTKGLTLPFVSYGGSSLMMALLAIGLVLRIDYETRLIKGHSTEELSANPSFGS.

A run of 11 helical transmembrane segments spans residues leucine 16–valine 36, valine 54–serine 74, tryptophan 82–glycine 102, leucine 109–alanine 129, threonine 144–proline 164, glycine 167–phenylalanine 187, tyrosine 189–proline 209, serine 233–valine 253, tryptophan 277–valine 297, alanine 310–valine 330, and leucine 342–valine 362.

This sequence belongs to the SEDS family. FtsW subfamily.

Its subcellular location is the cell inner membrane. The catalysed reaction is [GlcNAc-(1-&gt;4)-Mur2Ac(oyl-L-Ala-gamma-D-Glu-L-Lys-D-Ala-D-Ala)](n)-di-trans,octa-cis-undecaprenyl diphosphate + beta-D-GlcNAc-(1-&gt;4)-Mur2Ac(oyl-L-Ala-gamma-D-Glu-L-Lys-D-Ala-D-Ala)-di-trans,octa-cis-undecaprenyl diphosphate = [GlcNAc-(1-&gt;4)-Mur2Ac(oyl-L-Ala-gamma-D-Glu-L-Lys-D-Ala-D-Ala)](n+1)-di-trans,octa-cis-undecaprenyl diphosphate + di-trans,octa-cis-undecaprenyl diphosphate + H(+). It participates in cell wall biogenesis; peptidoglycan biosynthesis. In terms of biological role, peptidoglycan polymerase that is essential for cell division. The protein is Probable peptidoglycan glycosyltransferase FtsW of Thiomicrospira cyclica (strain DSM 14477 / JCM 11371 / ALM1) (Thioalkalimicrobium cyclicum).